We begin with the raw amino-acid sequence, 257 residues long: 3-deoxy-manno-octulosonate cytidylyltransferase (257 aa).

Belongs to the KdsB family.

Its subcellular location is the cytoplasm. It carries out the reaction 3-deoxy-alpha-D-manno-oct-2-ulosonate + CTP = CMP-3-deoxy-beta-D-manno-octulosonate + diphosphate. The protein operates within nucleotide-sugar biosynthesis; CMP-3-deoxy-D-manno-octulosonate biosynthesis; CMP-3-deoxy-D-manno-octulosonate from 3-deoxy-D-manno-octulosonate and CTP: step 1/1. It participates in bacterial outer membrane biogenesis; lipopolysaccharide biosynthesis. Its function is as follows. Activates KDO (a required 8-carbon sugar) for incorporation into bacterial lipopolysaccharide in Gram-negative bacteria. In Methylobacillus flagellatus (strain ATCC 51484 / DSM 6875 / VKM B-1610 / KT), this protein is 3-deoxy-manno-octulosonate cytidylyltransferase.